The following is a 198-amino-acid chain: Transmembrane protein 17 (198 aa).

2 N-linked (GlcNAc...) asparagine glycosylation sites follow: Asn13 and Asn23. Helical transmembrane passes span 45-65 (MSLY…IMML), 78-98 (FIVV…LYLG), 110-130 (LAGF…FLLF), and 142-162 (AVHI…FLTL).

This sequence belongs to the TMEM17 family. As to quaternary structure, part of the tectonic-like complex (also named B9 complex).

The protein localises to the cell projection. Its subcellular location is the cilium membrane. Functionally, transmembrane component of the tectonic-like complex, a complex localized at the transition zone of primary cilia and acting as a barrier that prevents diffusion of transmembrane proteins between the cilia and plasma membranes. Required for ciliogenesis and sonic hedgehog/SHH signaling. The sequence is that of Transmembrane protein 17 (TMEM17) from Bos taurus (Bovine).